A 501-amino-acid chain; its full sequence is Capsid protein (501 aa).

Residues 78–98 (SEEGFPVEPKTEEKDIPSTSG) are disordered. A Nuclear localization signal motif is present at residues 122–125 (KRGF). Residues 431-448 (CKCWICHEEGHYANECPK) form a CCHC-type zinc finger.

Belongs to the caulimoviridae capsid protein family. As to quaternary structure, interacts (via nuclear localization signal) with host importin alpha.

The protein resides in the virion. The protein localises to the host nucleus. Self assembles to form an icosahedral capsid, about 50 nm in diameter, nm, composed of 420 subunits of the viral capsid protein. The capsid encapsulates the genomic dsDNA. Following virus entry into host cell, provides nuclear import of the viral genome. Virus particles do not enter the nucleus, but dock at the nuclear membrane through the interaction with host importins. The sequence is that of Capsid protein from Cestrum parqui (CmYLCV).